A 517-amino-acid polypeptide reads, in one-letter code: Phospholipase C C (517 aa).

Positions 1–39 (MVSQGAFAGMSRRAFLAKAAGAGAAAVLTDWAAPVIEKA) form a signal peptide, tat-type signal.

This sequence belongs to the bacterial phospholipase C family. Post-translationally, predicted to be exported by the Tat system. The position of the signal peptide cleavage has not been experimentally proven.

It localises to the secreted. The protein localises to the cell wall. The enzyme catalyses a 1,2-diacyl-sn-glycero-3-phosphocholine + H2O = phosphocholine + a 1,2-diacyl-sn-glycerol + H(+). It carries out the reaction 1,2-dihexadecanoyl-sn-glycero-3-phosphocholine + H2O = 1,2-dihexadecanoyl-sn-glycerol + phosphocholine + H(+). In terms of biological role, involved in virulence. Induces cytotoxic effects on mouse macrophage cell lines, via direct or indirect enzymatic hydrolysis of cell membrane phospholipids. Hydrolyzes phosphatidylcholine. Does not have hemolytic activity. The chain is Phospholipase C C from Mycobacterium tuberculosis (strain ATCC 25618 / H37Rv).